A 325-amino-acid chain; its full sequence is Tagatose 1,6-diphosphate aldolase 1 (325 aa).

The protein belongs to the aldolase LacD family.

It catalyses the reaction D-tagatofuranose 1,6-bisphosphate = D-glyceraldehyde 3-phosphate + dihydroxyacetone phosphate. It functions in the pathway carbohydrate metabolism; D-tagatose 6-phosphate degradation; D-glyceraldehyde 3-phosphate and glycerone phosphate from D-tagatose 6-phosphate: step 2/2. The sequence is that of Tagatose 1,6-diphosphate aldolase 1 (lacD1) from Enterococcus faecalis (strain ATCC 700802 / V583).